We begin with the raw amino-acid sequence, 744 residues long: Collagen alpha-1(VIII) chain (744 aa).

Residues 1–27 form the signal peptide; sequence MAVQPGPPQLLQVLLTISLGSIRLIQA. The interval 29–117 is nonhelical region (NC2); that stretch reads AYYGIKPLPP…GKEIPLASLR (89 aa). Basic and acidic residues predominate over residues 101-110; it reads KEAVPKKGKE. Disordered regions lie at residues 101–434 and 463–584; these read KEAV…PGLQ and EAGH…QGEY. The tract at residues 118–571 is triple-helical region; it reads GEQGPRGEPG…PGPPGPPGPP (454 aa). The segment covering 128–137 has biased composition (pro residues); sequence PRGPPGPPGL. The span at 168–190 shows a compositional bias: low complexity; the sequence is KPGAMGMPGAKGEIGPKGEIGPM. The span at 203–217 shows a compositional bias: gly residues; sequence GLPGIGKPGGPGLPG. The span at 288–298 shows a compositional bias: pro residues; sequence KPGPPGEPGPQ. Residues 328–337 are compositionally biased toward gly residues; sequence GFPGGKGEQG. Over residues 389–403 the composition is skewed to pro residues; that stretch reads PGEPGLPGIPGPMGP. A compositionally biased stretch (gly residues) spans 411-420; sequence GPKGEGGIVG. Low complexity-rich tracts occupy residues 469–506 and 540–556; these read LPGL…TGPS and LHGP…QGQP. A compositionally biased stretch (pro residues) spans 558–579; the sequence is LPGPPGPPGPPGPPAVMPPTPA. The segment at 572–744 is nonhelical region (NC1); it reads AVMPPTPAPQ…SFSGYLLYPM (173 aa). A C1q domain is found at 611–744; the sequence is PAYEMPAFTA…SFSGYLLYPM (134 aa).

In terms of assembly, homotrimers, or heterotrimers in association with alpha 2(VIII) type collagens. Four homotrimers can form a tetrahedron stabilized by central interacting C-terminal NC1 trimers. Post-translationally, prolines at the third position of the tripeptide repeating unit (G-X-Y) are hydroxylated in some or all of the chains.

It localises to the secreted. The protein resides in the extracellular space. It is found in the extracellular matrix. The protein localises to the basement membrane. Macromolecular component of the subendothelium. Major component of the Descemet's membrane (basement membrane) of corneal endothelial cells. Also a component of the endothelia of blood vessels. Necessary for migration and proliferation of vascular smooth muscle cells and thus, has a potential role in the maintenance of vessel wall integrity and structure, in particular in atherogenesis. This Gallus gallus (Chicken) protein is Collagen alpha-1(VIII) chain (COL8A1).